The chain runs to 144 residues: Androgenic gland hormone (144 aa).

The signal sequence occupies residues 1–21 (MKGLVILVSLMCLALYNRICA). 4 disulfide bridges follow: Cys-33-Cys-123, Cys-42-Cys-59, Cys-44-Cys-141, and Cys-124-Cys-132. Positions 68–113 (SAPEDELAFEDYEDQDYFHPRALSIPSEIEHDNEKESDAFSILSRG) are cleaved as a propeptide — c peptide. A glycan (N-linked (GlcNAc...) (complex) asparagine) is linked at Asn-133.

In terms of tissue distribution, androgenic gland.

It is found in the secreted. Controls sex differentiation and the formation of male appendages, spermatogenesis, pigmentation, and male specific behavior. This is Androgenic gland hormone from Armadillidium vulgare (Pillbug).